We begin with the raw amino-acid sequence, 1455 residues long: Nik-related protein kinase (1455 aa).

The Protein kinase domain occupies 25-313; that stretch reads FSLDKAIGLG…SGNMLLHPFV (289 aa). Residues 31–39 and K54 each bind ATP; that span reads IGLGTYGRI. The active-site Proton acceptor is D177. 2 disordered regions span residues 385–404 and 471–568; these read LHGE…PQDQ and TQDN…EDKE. Residues 471–480 are compositionally biased toward polar residues; the sequence is TQDNKATSPE. A compositionally biased stretch (basic and acidic residues) spans 494–505; that stretch reads EALETEQPKDLD. The segment covering 520-531 has biased composition (low complexity); it reads QPRQGQAAEQQQ. Over residues 540-568 the composition is skewed to acidic residues; it reads PPEEDREPEQAEVQEEAVEPPQAEIEDKE. The stretch at 716-750 forms a coiled coil; it reads RRRHRRWEDIFNQHEEQLRRVENDREDDSSDNDEV. 2 disordered regions span residues 760 to 854 and 1029 to 1080; these read IEPH…PPYS and AFGN…TETS. Residues S847 and S850 each carry the phosphoserine modification. The span at 1029–1038 shows a compositional bias: low complexity; sequence AFGNHGANRG. A compositionally biased stretch (basic and acidic residues) spans 1044–1078; it reads RNREANGRNEENGAFGRDQHVFPEFEHEESDRGTE. The CNH domain maps to 1138 to 1425; it reads SSEVYCGSLW…RFLCARGDKM (288 aa).

Belongs to the protein kinase superfamily. STE Ser/Thr protein kinase family. STE20 subfamily.

The enzyme catalyses L-seryl-[protein] + ATP = O-phospho-L-seryl-[protein] + ADP + H(+). It carries out the reaction L-threonyl-[protein] + ATP = O-phospho-L-threonyl-[protein] + ADP + H(+). In terms of biological role, may phosphorylate cofilin-1 and induce actin polymerization through this process, during the late stages of embryogenesis. Involved in the TNF-alpha-induced signaling pathway. The protein is Nik-related protein kinase (Nrk) of Mus musculus (Mouse).